A 456-amino-acid chain; its full sequence is Equilibrative nucleoside transporter 2 (456 aa).

Residues 13–33 (LVGISFFILGLGTLLPWNFFI) form a helical membrane-spanning segment. Residues Asn-48 and Asn-57 are each glycosylated (N-linked (GlcNAc...) asparagine). 5 consecutive transmembrane segments (helical) span residues 70–90 (WVTLLSQLPLLLFTLLNSFLY), 99–119 (ILGSLLAILLLFALTAALVKV), 124–144 (GPFFSITMASVCFINSFSAVL), 162–182 (LFLSGQGLAGIFAALAMLLSM), and 193–213 (LGYFITPCVGILMSIVCYLSL). The N-linked (GlcNAc...) asparagine glycan is linked to Asn-225. Ser-252 carries the post-translational modification Phosphoserine. The next 5 membrane-spanning stretches (helical) occupy residues 291 to 311 (WLTALCLVLVFTVTLSVFPAI), 324 to 344 (WSQFFNPICCFLLFNIMDWLG), 360 to 380 (LLPLLVCLRFLFVPLFMLCHV), 386 to 406 (LPILFPQDAYFITFMLLFAVS), and 432 to 452 (ALMTFFLALGLSCGASLSFLF).

Belongs to the SLC29A/ENT transporter (TC 2.A.57) family. Glycosylated. As to expression, highly expressed in skeletal muscle. Expressed in liver, lung, placenta, brain, heart, kidney and ovarian tissues. Expressed in testis at the blood-brain-barrier.

The protein localises to the apical cell membrane. Its subcellular location is the basolateral cell membrane. It carries out the reaction inosine(in) = inosine(out). The catalysed reaction is adenosine(in) = adenosine(out). It catalyses the reaction uridine(out) = uridine(in). The enzyme catalyses thymidine(in) = thymidine(out). It carries out the reaction hypoxanthine(out) = hypoxanthine(in). The catalysed reaction is adenine(out) = adenine(in). It catalyses the reaction cytidine(in) = cytidine(out). The enzyme catalyses thymine(out) = thymine(in). It carries out the reaction uracil(in) = uracil(out). The catalysed reaction is guanine(out) = guanine(in). It catalyses the reaction guanosine(in) = guanosine(out). Its function is as follows. Bidirectional uniporter involved in the facilitative transport of nucleosides and nucleobases, and contributes to maintaining their cellular homeostasis. Functions as a Na(+)-independent, passive transporter. Involved in the transport of nucleosides such as inosine, adenosine, uridine, thymidine, cytidine and guanosine. Also able to transport purine nucleobases (hypoxanthine, adenine, guanine) and pyrimidine nucleobases (thymine, uracil). Involved in nucleoside transport at basolateral membrane of kidney cells, allowing liver absorption of nucleoside metabolites. Mediates apical nucleoside uptake into Sertoli cells, thereby regulating the transport of nucleosides in testis across the blood-testis-barrier. Mediates both the influx and efflux of hypoxanthine in skeletal muscle microvascular endothelial cells to control the amount of intracellular hypoxanthine available for xanthine oxidase-mediated ROS production. In terms of biological role, non functional nucleoside transporter protein for adenosine or thymidine transport. Does not express on cell membrane. This is Equilibrative nucleoside transporter 2 from Homo sapiens (Human).